We begin with the raw amino-acid sequence, 303 residues long: Probable cell division protein WhiA (303 aa).

The H-T-H motif DNA-binding region spans Ser272–Leu303.

The protein belongs to the WhiA family.

Involved in cell division and chromosome segregation. The polypeptide is Probable cell division protein WhiA (Streptococcus pyogenes serotype M6 (strain ATCC BAA-946 / MGAS10394)).